The sequence spans 319 residues: Cytochrome c biogenesis protein CcsA (319 aa).

7 consecutive transmembrane segments (helical) span residues 9–29 (ILTHISFSLVSIGITIFLITL), 44–64 (GVIGTFLCITGLLVTRWAYSG), 71–91 (LYESLLFLSWSFAIIHMFPYL), 143–163 (MVLGYAALLCGSLLSVALLVI), 225–245 (IISLGFIFLTIGILSGAVWAN), 259–273 (TWAFITWTMFAIYLH), and 286–306 (AIVAFLGFIIIWICYFGVNLL).

The protein belongs to the CcmF/CycK/Ccl1/NrfE/CcsA family. In terms of assembly, may interact with Ccs1.

Its subcellular location is the plastid. It is found in the chloroplast thylakoid membrane. Required during biogenesis of c-type cytochromes (cytochrome c6 and cytochrome f) at the step of heme attachment. This is Cytochrome c biogenesis protein CcsA from Oenothera argillicola (Appalachian evening primrose).